We begin with the raw amino-acid sequence, 401 residues long: MNSPQPPDTTAAGSVHTAPTYTLRQLVMYFLRLGTLGFGGPVALAGYMHRDLVEAKQWITDADYKEGLALAQLAPGPLAAQLAIYLGYVHYRIVGATLVGVAFVLPSFLMVLALGWAYVRFGGLTWMQSVFYGVGAAVIGIIAISAYKLTKKSVGNDKLLWFIYLVLVAVTVITESEVAWLFLAAGVLVWFWRAPPKWLRQGKMNAFAATPLPAASGMMSTLDWPLLSQIGVFFAKAGAFVFGSGLAIVPFLYGGVVTEYHWLNDKQFVDAVAVAMITPGPVVITVGFIGYLVAGLPGACVAAAATFLPCYLFTVLPAPYFKKYGKLPAILAFVDGVTAAAIGAITGAVIVLAKRSIVDIPTALLALVTVALLLKFKKLSEPMIVAGAALIGLVAYPLLHH.

12 helical membrane-spanning segments follow: residues 26-46, 67-87, 93-113, 124-144, 172-192, 214-234, 237-257, 272-294, 299-321, 330-350, 356-376, and 379-399; these read LVMYFLRLGTLGFGGPVALAG, GLALAQLAPGPLAAQLAIYLG, IVGATLVGVAFVLPSFLMVLA, LTWMQSVFYGVGAAVIGIIAI, VITESEVAWLFLAAGVLVWFW, AASGMMSTLDWPLLSQIGVFF, AGAFVFGSGLAIVPFLYGGVV, VAVAMITPGPVVITVGFIGYLVA, ACVAAAATFLPCYLFTVLPAPYF, ILAFVDGVTAAAIGAITGAVI, SIVDIPTALLALVTVALLLKF, and LSEPMIVAGAALIGLVAYPLL.

It belongs to the chromate ion transporter (CHR) (TC 2.A.51) family.

It is found in the cell inner membrane. In terms of biological role, this protein reduces chromate accumulation and is essential for chromate resistance. The protein is Chromate transport protein of Cupriavidus metallidurans (strain ATCC 43123 / DSM 2839 / NBRC 102507 / CH34) (Ralstonia metallidurans).